We begin with the raw amino-acid sequence, 84 residues long: uncharacterized protein (84 aa).

The tract at residues 8–47 (CECCDRDLPPDSGDAMICTFECTFCAGCAETKLGGTCPNC) is cysteine motif.

This is an uncharacterized protein from Rhizobium meliloti (strain 1021) (Ensifer meliloti).